The sequence spans 123 residues: Intracellular iron chaperone frataxin (123 aa).

As to quaternary structure, homodimer, upon Fe(2+) binding. Interacts with the SufS/SufU complex. Interacts with CpfC. The cofactor is Fe(2+).

It localises to the cytoplasm. Functionally, plays an essential role in iron intracellular trafficking to iron cofactor biogenesis systems including iron-sulfur cluster (Fe-S) or heme assembly. Promotes the biosynthesis of iron-sulfur clusters by delivering Fe to the complex composed of the cysteine desulfurase SufS and the zinc-dependent sulfurtransferase SufU. Also plays a critical role in coproporphyrin-dependent heme b biogenesis and thus provides an essential function for the bacterial global metabolism. This Bacillus subtilis (strain 168) protein is Intracellular iron chaperone frataxin (fra).